Here is a 359-residue protein sequence, read N- to C-terminus: MKKYLALALIAPLLISCSTTKKGDTYNEAWVKDTNGFDILMGQFAHNIENIWGFKEVVIAGPKDYVKYTDQYQTRSHINFDDGTITIETIAGTEPAAHLRRAIIKTLLMGDDPSSVDLYSDVDDITISKEPFLYGQVVDNTGQPIRWEGRASNFADYLLKNRLKSRSNGLRIIYSVTINMVPNHLDKRAHKYLGMVRQASRKYGVDESLILAIMQTESSFNPYAVSRSDALGLMQVVQNTAGKDVFRSQGKSGTPSRSFLFDPASNIDTGTAYLAMLNNVYLGGIDNPTSRRYAVITAYNGGAGSVLRVFSNDKIQAANIINTMTPGDVYQTLTTRHPSAESRRYLYKVNTAQKSYRRR.

Residues 1-16 (MKKYLALALIAPLLIS) form the signal peptide. C17 carries N-palmitoyl cysteine lipidation. Residue C17 is the site of S-diacylglycerol cysteine attachment.

This sequence belongs to the transglycosylase Slt family.

Its subcellular location is the cell outer membrane. The enzyme catalyses Exolytic cleavage of the (1-&gt;4)-beta-glycosidic linkage between N-acetylmuramic acid (MurNAc) and N-acetylglucosamine (GlcNAc) residues in peptidoglycan, from either the reducing or the non-reducing ends of the peptidoglycan chains, with concomitant formation of a 1,6-anhydrobond in the MurNAc residue.. Murein-degrading enzyme. May play a role in recycling of muropeptides during cell elongation and/or cell division. In Shigella flexneri serotype 5b (strain 8401), this protein is Membrane-bound lytic murein transglycosylase C.